The primary structure comprises 256 residues: Short-chain dehydrogenase/reductase cdmF (256 aa).

Residues Val-11, Asp-57, and Arg-119 each coordinate NADP(+). The active-site Proton donor is Ser-137. The NADP(+) site is built by Tyr-151, Lys-155, Gly-183, and Asn-187. Tyr-151 (proton acceptor) is an active-site residue. The Lowers pKa of active site Tyr role is filled by Lys-155.

This sequence belongs to the short-chain dehydrogenases/reductases (SDR) family.

It catalyses the reaction 3-hydroxypentacecilide A + A = chrodrimanin C + AH2. The catalysed reaction is chrodrimanin F + A = chrodrimanin H + AH2. It functions in the pathway secondary metabolite biosynthesis; terpenoid biosynthesis. Its function is as follows. Short-chain dehydrogenase/reductase; part of the gene cluster that mediates the biosynthesis of chrodrimanin B, a meroterpenoid that acts as a potent blocker of insect GABA-gated chloride channels. The first step of the pathway is the biosynthesis of 6-hydroxymellein by the polyketide synthase cdmE. The prenyltransferase cdmH acts as a 6-hydroxymellein 5-farnesyltransferase and produces the hydrophobic metabolite verruculide C. The FAD-dependent monooxygenase cdmI further converts verruculide C into verruculide B. The terpene cyclase cdmG then produced the pentacyclic molecule 3-hydroxypentacecilide A, the backbone structure of chrodrimanin B, via folding the farnesyl moiety of the substrate into the chair-boat conformation. The short-chain dehydrogenase/reductase cdmF functions as the 3-OH dehydrogenase that oxidizes the C-3 hydroxyl group of 3-hydroxypentacecilide A and produces chrodrimanin C, the dehydrogenated product of 3-hydroxypentacecilide A. The cytochrome P450 monooxygenase cdmJ then accepts both 3-hydroxypentacecilide A and chrodrimanin C and functions as a C-7-beta-hydroxylase to produce respectively chrodrimanin H and chrodrimanin F. The dioxygenase cdmA accepts chrodrimanin H to afford chrodrimanin E, which is further transformed to chrodrimanin A by the dioxygenase cdmD. CdmA can also accept chrodrimanin C as substrate to convert it into verruculide A, which is further converted into chrodrimanin T by cdmD. The last step of the biosynthesis is proposed to be performed by the acetyltransferase cdmC which acetylates chrodrimanin A to yield chrodrimanin B. The pathway may also lead to the production of additional shunt products, including chrodrimanins T and U. The polypeptide is Short-chain dehydrogenase/reductase cdmF (Talaromyces verruculosus (Penicillium verruculosum)).